A 192-amino-acid chain; its full sequence is MVFIIDTQRHFAHQFTTNPFVIFSNLLGATGHSHAFYKRLTATFSRQRSFGRHIAVVDMWESIRWQILNGDEIEVSPEHRSLAWRELIINVASNTPLDNTFRTMFQKADFENFDYNTPIVYNLKTKTLTMYNERIRAALNRPVRFNDQTVNVNIAYVFLFFICIVLLSVLAVFFDTNIATDTKSKNVAAKIK.

The helical transmembrane segment at 154-174 (IAYVFLFFICIVLLSVLAVFF) threads the bilayer.

It localises to the host membrane. The protein localises to the virion. The protein resides in the host cytoplasm. It is found in the host nucleus. Functionally, per os infectivity factor. This is Per os infectivity factor 6 (AC68) from Autographa californica nuclear polyhedrosis virus (AcMNPV).